We begin with the raw amino-acid sequence, 928 residues long: Protein ARABIDILLO 2 (928 aa).

Residues 3–8 (RRVRQR) carry the Nuclear localization signal motif. The region spanning 37 to 83 (YVNWTSLPYDTVFHLFTRLNYRDRASLASTCRTWRSLGASSFLWSSL) is the F-box domain. 13 ARM repeats span residues 147–186 (AARH…KLRV), 237–278 (TSNI…KSSQ), 303–341 (KGKV…DLIR), 370–409 (SQGL…TFIV), 419–458 (CGRA…NLSV), 460–499 (AKVA…NLSV), 501–543 (EEHK…NLAA), 545–585 (DKCS…NLAA), 591–630 (GNNA…NLAF), 632–674 (DKNR…GLSV), 676–715 (EANS…NLSF), 717–757 (PGNA…YMFD), and 824–864 (IPEA…QFTI).

This sequence belongs to the beta-catenin family. Expressed ubiquitously.

The protein resides in the nucleus. Functionally, promotes lateral root initiation and development, independently of auxin (IAA) and abscisis acid (ABA). This is Protein ARABIDILLO 2 from Arabidopsis thaliana (Mouse-ear cress).